The sequence spans 203 residues: uncharacterized protein (203 aa).

The tract at residues 117–138 (SSDPKLKQPSNCLNDQTNNDSA) is disordered. A compositionally biased stretch (polar residues) spans 124–138 (QPSNCLNDQTNNDSA).

The protein resides in the cytoplasm. The protein localises to the nucleus. This is an uncharacterized protein from Schizosaccharomyces pombe (strain 972 / ATCC 24843) (Fission yeast).